Reading from the N-terminus, the 234-residue chain is tRNA (guanine-N(1)-)-methyltransferase (234 aa).

Residues glycine 110 and 134–139 (IGDYVL) contribute to the S-adenosyl-L-methionine site.

Belongs to the RNA methyltransferase TrmD family. In terms of assembly, homodimer.

Its subcellular location is the cytoplasm. The enzyme catalyses guanosine(37) in tRNA + S-adenosyl-L-methionine = N(1)-methylguanosine(37) in tRNA + S-adenosyl-L-homocysteine + H(+). Specifically methylates guanosine-37 in various tRNAs. This Tropheryma whipplei (strain Twist) (Whipple's bacillus) protein is tRNA (guanine-N(1)-)-methyltransferase.